A 165-amino-acid chain; its full sequence is MERFIENAMYASRWLLAPVYFGLSLALLALTVKFFQEIIHVLPNILTIAEADLILLLLSLVDMTLVGGLLVMVMFSGYENFVSQLDIHEGKEKLSWLGKMDASSLKNKVAASIVAISSIHLLRVFMDAKNVPDNKLMWYVIIHLTFVLSAFVMGYLDKISRSKGY.

The next 3 helical transmembrane spans lie at 15–35 (LLAP…VKFF), 53–73 (LILL…LVMV), and 136–156 (LMWY…MGYL).

It belongs to the UPF0114 family.

It localises to the cell membrane. This is UPF0114 protein ESA_00283 from Cronobacter sakazakii (strain ATCC BAA-894) (Enterobacter sakazakii).